The primary structure comprises 311 residues: Heme A synthase (311 aa).

The Cytoplasmic portion of the chain corresponds to 1-6 (MQRFIK). A helical transmembrane segment spans residues 7–27 (WLAVITSLDLLIVLLGGALVT). Over 28–62 (KTGSGQGCGKSWPLCNGEFVPSNLSMETIIELSHR) the chain is Extracellular. Cysteine 35 and cysteine 42 form a disulfide bridge. The active site involves glutamate 58. Histidine 61 lines the heme o pocket. Residues 63–83 (LTSGSAGILVTLLCILSWKYY) traverse the membrane as a helical segment. Topologically, residues 84–91 (KHVRETKT) are cytoplasmic. Residues 92–112 (LAILSFVFLVAQALMGAAAVV) form a helical membrane-spanning segment. The Extracellular portion of the chain corresponds to 113-121 (WGQMPAVLA). A helical transmembrane segment spans residues 122-142 (IHFGISLISFASVILLTCLIF). Histidine 123 contributes to the heme o binding site. Topologically, residues 143 to 159 (EIDQKFDARSLIMDKKM) are cytoplasmic. A helical transmembrane segment spans residues 160-180 (KFHIYGVTIYSYIVVYTGALV). The Extracellular segment spans residues 181–211 (RHERASLACPDFPLCSKNRPMPTQLHEWVQM). A disulfide bond links cysteine 189 and cysteine 195. Residues 212-232 (GHRVAAMLIFAWILYAMILAI) form a helical membrane-spanning segment. Heme b is bound at residue histidine 213. At 233–243 (RHYKQQPVVYW) the chain is on the cytoplasmic side. Residues 244–264 (GWIISFILVTLQAVVGVLVVF) form a helical membrane-spanning segment. Residues 265–271 (TNASLAM) lie on the Extracellular side of the membrane. Residues 272–292 (ALLHSLFISCLFAVLCYLVML) traverse the membrane as a helical segment. Residue histidine 275 coordinates heme b. Residues 293-311 (GTRSKVNAKEAELTSKQTK) lie on the Cytoplasmic side of the membrane.

The protein belongs to the COX15/CtaA family. Type 1 subfamily. Interacts with CtaB. Heme b is required as a cofactor.

The protein resides in the cell membrane. The catalysed reaction is Fe(II)-heme o + 2 A + H2O = Fe(II)-heme a + 2 AH2. The protein operates within porphyrin-containing compound metabolism; heme A biosynthesis; heme A from heme O: step 1/1. Functionally, catalyzes the conversion of heme O to heme A by two successive hydroxylations of the methyl group at C8. The first hydroxylation forms heme I, the second hydroxylation results in an unstable dihydroxymethyl group, which spontaneously dehydrates, resulting in the formyl group of heme A. This chain is Heme A synthase, found in Bacillus cereus (strain ATCC 14579 / DSM 31 / CCUG 7414 / JCM 2152 / NBRC 15305 / NCIMB 9373 / NCTC 2599 / NRRL B-3711).